The following is a 456-amino-acid chain: MHEFTPRQIVEKLNEHVIGQADAKRAVAIALRNRYRRQLLDPSLRDEVTPKNILMIGPTGVGKTEIARRLAKLVRAPFVKIEATKFTEVGYVGRDVESMVRDLVEASLRLVKDEKKEALKERAEAVANERIVDALVGKKASTGLGGGNPFEMLFGGTQKPPEQETANDTADRSVIRQQLFQGQLEDRMIDVDIEERQMDLFSGQQGMEGLANLQDMLGQVMPKKTKKRQLSVKEARPILTAEEAERLLDLNEVHDEAVRRAEQMGIIFVDEIDKIATKGQDSAGVSREGVQRDILPIVEGSTVVTKYGPVKTDHMLFIAAGAFHMAKPSDLIPELQGRFPIRVELDSLTEDDFVKILTEPNQALLKQYKALLGAEQVHVTFTEDAIRQIARIAAQVNDETDNIGARRLYTIMERVLEELSFEAAEMPETDVTITPQYVMDRVGKVADDRDLSQFIL.

ATP-binding positions include Ile18, 60–65 (GVGKTE), Asp270, Glu334, and Arg406.

It belongs to the ClpX chaperone family. HslU subfamily. A double ring-shaped homohexamer of HslV is capped on each side by a ring-shaped HslU homohexamer. The assembly of the HslU/HslV complex is dependent on binding of ATP.

It localises to the cytoplasm. Functionally, ATPase subunit of a proteasome-like degradation complex; this subunit has chaperone activity. The binding of ATP and its subsequent hydrolysis by HslU are essential for unfolding of protein substrates subsequently hydrolyzed by HslV. HslU recognizes the N-terminal part of its protein substrates and unfolds these before they are guided to HslV for hydrolysis. This chain is ATP-dependent protease ATPase subunit HslU, found in Exiguobacterium sibiricum (strain DSM 17290 / CCUG 55495 / CIP 109462 / JCM 13490 / 255-15).